The sequence spans 425 residues: Caveolae-associated protein 2 (425 aa).

Residues 1–42 (MGEDAAQAEKFQHPGSDMRQEKPSSPSPMPSSTPSPSLNLGN) form a disordered region. Position 2 is an N-acetylglycine (glycine 2). The interval 2 to 168 (GEDAAQAEKF…IFQEENEIPA (167 aa)) is interaction with CAVIN1. Over residues 10–22 (KFQHPGSDMRQEK) the composition is skewed to basic and acidic residues. Phosphoserine is present on residues serine 27, serine 35, serine 37, and serine 51. 2 coiled-coil regions span residues 61 to 82 (LLDK…MEQR) and 125 to 154 (TRAV…RRNH). Residues 62–100 (LDKLVNMLDAVQENQHKMEQRQISLEGSVKGIQNDLTKL) are leucine-zipper. Threonine 196 and threonine 199 each carry phosphothreonine. Disordered regions lie at residues 199 to 234 (TVDL…IKRS) and 271 to 425 (IKKS…HQTS). Phosphoserine is present on residues serine 203, serine 204, and serine 218. Residues 203–219 (SSDDDLPHDEEALEDSA) are compositionally biased toward acidic residues. A coiled-coil region spans residues 210-268 (HDEEALEDSAEEKVEESRAEKIKRSSLKKVDSLKKAFSRQNIEKKMNKLGTKIVSVERR). The segment covering 220–234 (EEKVEESRAEKIKRS) has biased composition (basic and acidic residues). Polar residues predominate over residues 274–287 (SLTSNHQKISSGKS). Serine 283, serine 284, serine 287, serine 288, and serine 293 each carry phosphoserine. The span at 303–317 (REGESHAENETKSED) shows a compositional bias: basic and acidic residues. Serine 332, serine 341, serine 366, and serine 370 each carry phosphoserine. At threonine 375 the chain carries Phosphothreonine. Residues 376–385 (IVEDEEEESV) show a composition bias toward acidic residues. The residue at position 395 (tyrosine 395) is a Phosphotyrosine. Serine 403 carries the post-translational modification Phosphoserine.

Belongs to the CAVIN family. As to quaternary structure, component of the CAVIN complex composed of CAVIN1, CAVIN2, CAVIN3 and CAVIN4. Binds to PRKCA in the presence of phosphatidylserine. Interacts with CAVIN4; this augments the transactivation of NPPA by CAVIN4. Interacts with CAVIN1. Interacts with CAV3. Post-translationally, phosphorylated on Ser residues. As to expression, highly expressed in heart and lung, and expressed at lower levels in brain, kidney, liver, pancreas, placenta, and skeletal muscle.

The protein localises to the cytoplasm. It localises to the cytosol. Its subcellular location is the membrane. It is found in the caveola. Plays an important role in caveolar biogenesis and morphology. Regulates caveolae morphology by inducing membrane curvature within caveolae. Plays a role in caveola formation in a tissue-specific manner. Required for the formation of caveolae in the lung and fat endothelia but not in the heart endothelia. Negatively regulates the size or stability of CAVIN complexes in the lung endothelial cells. May play a role in targeting PRKCA to caveolae. The protein is Caveolae-associated protein 2 of Homo sapiens (Human).